A 122-amino-acid chain; its full sequence is Large ribosomal subunit protein uL14 (122 aa).

It belongs to the universal ribosomal protein uL14 family. As to quaternary structure, part of the 50S ribosomal subunit. Forms a cluster with proteins L3 and L19. In the 70S ribosome, L14 and L19 interact and together make contacts with the 16S rRNA in bridges B5 and B8.

Functionally, binds to 23S rRNA. Forms part of two intersubunit bridges in the 70S ribosome. The sequence is that of Large ribosomal subunit protein uL14 from Desulfovibrio desulfuricans (strain ATCC 27774 / DSM 6949 / MB).